A 180-amino-acid chain; its full sequence is UPF0398 protein EF_1150 (180 aa).

The protein belongs to the UPF0398 family.

This is UPF0398 protein EF_1150 from Enterococcus faecalis (strain ATCC 700802 / V583).